The chain runs to 55 residues: Photosystem II reaction center protein K (55 aa).

Residues 1-18 (MFYIHLENTFDLSSTILV) constitute a propeptide that is removed on maturation. Residues 26–46 (IFDPIVDVMPIIPLFFFLLAF) traverse the membrane as a helical segment.

This sequence belongs to the PsbK family. As to quaternary structure, PSII is composed of 1 copy each of membrane proteins PsbA, PsbB, PsbC, PsbD, PsbE, PsbF, PsbH, PsbI, PsbJ, PsbK, PsbL, PsbM, PsbT, PsbX, PsbY, PsbZ, Psb30/Ycf12, at least 3 peripheral proteins of the oxygen-evolving complex and a large number of cofactors. It forms dimeric complexes.

The protein localises to the plastid. The protein resides in the chloroplast thylakoid membrane. Functionally, one of the components of the core complex of photosystem II (PSII). PSII is a light-driven water:plastoquinone oxidoreductase that uses light energy to abstract electrons from H(2)O, generating O(2) and a proton gradient subsequently used for ATP formation. It consists of a core antenna complex that captures photons, and an electron transfer chain that converts photonic excitation into a charge separation. The polypeptide is Photosystem II reaction center protein K (Anthoceros angustus (Hornwort)).